The chain runs to 802 residues: Aldehyde dehydrogenase family 16 member A1 (802 aa).

A disordered region spans residues S513–V554.

This sequence belongs to the aldehyde dehydrogenase family. In terms of assembly, interacts with SPG21.

In Rattus norvegicus (Rat), this protein is Aldehyde dehydrogenase family 16 member A1 (Aldh16a1).